The primary structure comprises 494 residues: Probable cytosol aminopeptidase (494 aa).

2 residues coordinate Mn(2+): lysine 260 and aspartate 265. Lysine 272 is a catalytic residue. Mn(2+)-binding residues include aspartate 283, aspartate 342, and glutamate 344. Arginine 346 is an active-site residue.

Belongs to the peptidase M17 family. Mn(2+) serves as cofactor.

The protein resides in the cytoplasm. It carries out the reaction Release of an N-terminal amino acid, Xaa-|-Yaa-, in which Xaa is preferably Leu, but may be other amino acids including Pro although not Arg or Lys, and Yaa may be Pro. Amino acid amides and methyl esters are also readily hydrolyzed, but rates on arylamides are exceedingly low.. It catalyses the reaction Release of an N-terminal amino acid, preferentially leucine, but not glutamic or aspartic acids.. Functionally, presumably involved in the processing and regular turnover of intracellular proteins. Catalyzes the removal of unsubstituted N-terminal amino acids from various peptides. The sequence is that of Probable cytosol aminopeptidase from Bacillus cereus (strain ATCC 10987 / NRS 248).